The chain runs to 235 residues: Glucosamine-6-phosphate deaminase (235 aa).

The Proton acceptor; for enolization step role is filled by aspartate 62. Catalysis depends on asparagine 128, which acts as the For ring-opening step. Histidine 130 (proton acceptor; for ring-opening step) is an active-site residue. The For ring-opening step role is filled by glutamate 135.

It belongs to the glucosamine/galactosamine-6-phosphate isomerase family. NagB subfamily.

The enzyme catalyses alpha-D-glucosamine 6-phosphate + H2O = beta-D-fructose 6-phosphate + NH4(+). Its pathway is amino-sugar metabolism; N-acetylneuraminate degradation; D-fructose 6-phosphate from N-acetylneuraminate: step 5/5. Functionally, catalyzes the reversible isomerization-deamination of glucosamine 6-phosphate (GlcN6P) to form fructose 6-phosphate (Fru6P) and ammonium ion. The polypeptide is Glucosamine-6-phosphate deaminase (Lactococcus lactis subsp. lactis (strain IL1403) (Streptococcus lactis)).